A 189-amino-acid chain; its full sequence is Molybdenum cofactor guanylyltransferase (189 aa).

Residues 10–12, Lys23, Asn51, Asp69, and Asp99 each bind GTP; that span reads LAG. Asp99 lines the Mg(2+) pocket.

It belongs to the MobA family. Monomer. Mg(2+) serves as cofactor.

It is found in the cytoplasm. It catalyses the reaction Mo-molybdopterin + GTP + H(+) = Mo-molybdopterin guanine dinucleotide + diphosphate. In terms of biological role, transfers a GMP moiety from GTP to Mo-molybdopterin (Mo-MPT) cofactor (Moco or molybdenum cofactor) to form Mo-molybdopterin guanine dinucleotide (Mo-MGD) cofactor. This is Molybdenum cofactor guanylyltransferase from Pasteurella multocida (strain Pm70).